The following is a 364-amino-acid chain: Dihydroorotate dehydrogenase (quinone) (364 aa).

FMN-binding positions include 61-65 (AGFDK) and Thr85. A substrate-binding site is contributed by Lys65. Residue 110 to 114 (NRMGF) participates in substrate binding. Asn139 and Asn170 together coordinate FMN. Position 170 (Asn170) interacts with substrate. Residue Ser173 is the Nucleophile of the active site. Asn175 is a binding site for substrate. Residues Lys214 and Ala242 each coordinate FMN. Substrate is bound at residue 243–244 (NT). FMN-binding positions include Gly266, Gly295, and 316 to 317 (YS).

The protein belongs to the dihydroorotate dehydrogenase family. Type 2 subfamily. In terms of assembly, monomer. Requires FMN as cofactor.

The protein resides in the cell membrane. The enzyme catalyses (S)-dihydroorotate + a quinone = orotate + a quinol. Its pathway is pyrimidine metabolism; UMP biosynthesis via de novo pathway; orotate from (S)-dihydroorotate (quinone route): step 1/1. Its function is as follows. Catalyzes the conversion of dihydroorotate to orotate with quinone as electron acceptor. The polypeptide is Dihydroorotate dehydrogenase (quinone) (Rhodopseudomonas palustris (strain ATCC BAA-98 / CGA009)).